A 262-amino-acid polypeptide reads, in one-letter code: MAFHVMIIPSMNCPSDCSYCWGVDRDSRVMDMETVREMVSWLMEFRNEPATFTFHGGEPLLAGYEFYRDTLKLISERLSFLKPAFAIQTNLWLMTDEMAELFAEYSIPIGSSLDGPREINDYQRGDGYFDRTMQGYEIARKHGLRVSFISTFTSYSIRRREEIFNFFLENGMNLKLHPALPSLKSSDPEEWAITAEEYGDLLLYLLDSYLEHFGEIEIQNIDHFAKSAFLRRGLYVHMLIVWATPSQLTPTVIYTHAIASLV.

The region spanning 1-211 is the Radical SAM core domain; it reads MAFHVMIIPS…LLYLLDSYLE (211 aa). [4Fe-4S] cluster contacts are provided by Cys13, Cys17, and Cys20.

It belongs to the radical SAM superfamily. Anaerobic sulfatase-maturating enzyme family. It depends on [4Fe-4S] cluster as a cofactor.

This is an uncharacterized protein from Methanothermobacter thermautotrophicus (strain ATCC 29096 / DSM 1053 / JCM 10044 / NBRC 100330 / Delta H) (Methanobacterium thermoautotrophicum).